The following is a 275-amino-acid chain: Polyamine aminopropyltransferase (275 aa).

One can recognise a PABS domain in the interval glutamate 2–lysine 235. Glutamine 31 contacts S-methyl-5'-thioadenosine. Positions 62 and 86 each coordinate spermidine. Residues glutamate 106 and aspartate 137–glycine 138 contribute to the S-methyl-5'-thioadenosine site. The active-site Proton acceptor is aspartate 155. Position 155–158 (aspartate 155–glutamate 158) interacts with spermidine. Proline 162 is a binding site for S-methyl-5'-thioadenosine.

This sequence belongs to the spermidine/spermine synthase family. Homodimer or homotetramer.

The protein resides in the cytoplasm. The catalysed reaction is S-adenosyl 3-(methylsulfanyl)propylamine + putrescine = S-methyl-5'-thioadenosine + spermidine + H(+). It participates in amine and polyamine biosynthesis; spermidine biosynthesis; spermidine from putrescine: step 1/1. Its function is as follows. Catalyzes the irreversible transfer of a propylamine group from the amino donor S-adenosylmethioninamine (decarboxy-AdoMet) to putrescine (1,4-diaminobutane) to yield spermidine. The protein is Polyamine aminopropyltransferase of Bacillus mycoides (strain KBAB4) (Bacillus weihenstephanensis).